Consider the following 183-residue polypeptide: Glutathione-regulated potassium-efflux system ancillary protein KefG (183 aa).

This sequence belongs to the NAD(P)H dehydrogenase (quinone) family. KefG subfamily. As to quaternary structure, interacts with KefB.

The protein localises to the cell inner membrane. The enzyme catalyses a quinone + NADH + H(+) = a quinol + NAD(+). The catalysed reaction is a quinone + NADPH + H(+) = a quinol + NADP(+). Regulatory subunit of a potassium efflux system that confers protection against electrophiles. Required for full activity of KefB. The sequence is that of Glutathione-regulated potassium-efflux system ancillary protein KefG from Escherichia coli O6:K15:H31 (strain 536 / UPEC).